The following is a 215-amino-acid chain: High mobility group protein B1 (215 aa).

1-10 is a heparin binding site; the sequence is MGKGDPKKPR. The interval 1-97 is sufficient for interaction with HAVCR2; the sequence is MGKGDPKKPR…KFKDPNAPKR (97 aa). N6-acetyllysine occurs at positions 3, 7, 8, and 12. The LPS binding (delipidated) stretch occupies residues 3–15; it reads KGDPKKPRGKMSS. Residues 9-79 constitute a DNA-binding region (HMG box 1); sequence PRGKMSSYAF…RYEREMKTYI (71 aa). At C23 the chain carries Cysteine sulfonic acid (-SO3H); alternate. The cysteines at positions 23 and 45 are disulfide-linked. Positions 27–43 match the Nuclear localization signal (NLS) 1 motif; it reads HKKKHPDASVNFSEFSK. 3 positions are modified to N6-acetyllysine: K28, K29, and K30. K28 is covalently cross-linked (Isoglutamyl lysine isopeptide (Lys-Gln) (interchain with Q-?)). Residue S35 is modified to Phosphoserine. N6-acetyllysine is present on K43. Isoglutamyl lysine isopeptide (Lys-Gln) (interchain with Q-?) cross-links involve residues K43 and K44. Cysteine sulfonic acid (-SO3H); alternate is present on C45. T51 carries the post-translational modification Phosphothreonine. K68 is covalently cross-linked (Isoglutamyl lysine isopeptide (Lys-Gln) (interchain with Q-?)). The segment at 76 to 95 is disordered; that stretch reads KTYIPPKGETKKKFKDPNAP. An LPS binding (Lipid A) region spans residues 80–96; the sequence is PPKGETKKKFKDPNAPK. A compositionally biased stretch (basic and acidic residues) spans 83–94; it reads GETKKKFKDPNA. Residues 89-108 are cytokine-stimulating activity; that stretch reads FKDPNAPKRPPSAFFLFCSE. K90 is subject to N6-acetyllysine. The HMG box 2 DNA-binding region spans 95 to 163; sequence PKRPPSAFFL…KYEKDIAAYR (69 aa). S100 carries the post-translational modification Phosphoserine. Cysteine sulfonic acid (-SO3H) is present on C106. Residues K127, K128, K141, K172, K173, K177, and K180 each carry the N6-acetyllysine modification. A binding to AGER/RAGE region spans residues 150-183; that stretch reads KLKEKYEKDIAAYRAKGKPDAAKKGVVKAEKSKK. Positions 162–179 are enriched in basic and acidic residues; the sequence is YRAKGKPDAAKKGVVKAE. Residues 162–215 form a disordered region; the sequence is YRAKGKPDAAKKGVVKAEKSKKKKEEEEDEEDEEDEEEEEDEEDEEEEEDDDDE. Positions 178-184 match the Nuclear localization signal (NLS) 2 motif; sequence AEKSKKK. An Isoglutamyl lysine isopeptide (Lys-Gln) (interchain with Q-?) cross-link involves residue K180. The residue at position 181 (S181) is an ADP-ribosylserine. K182, K183, K184, and K185 each carry N6-acetyllysine. Isoglutamyl lysine isopeptide (Lys-Gln) (interchain with Q-?) cross-links involve residues K182, K183, and K184. The span at 187-215 shows a compositional bias: acidic residues; that stretch reads EEEDEEDEEDEEEEEDEEDEEEEEDDDDE.

This sequence belongs to the HMGB family. Interacts (fully reduced HMGB1) with CXCL12; probably in a 1:2 ratio involving two molecules of CXCL12, each interacting with one HMG box of HMGB1; inhibited by glycyrrhizin. Associates with the TLR4:LY96 receptor complex. Component of the RAG complex composed of core components RAG1 and RAG2, and associated component HMGB1 or HMGB2. Interacts (in cytoplasm upon starvation) with BECN1; inhibits the interaction of BECN1 and BCL2 leading to promotion of autophagy. Interacts with KPNA1; involved in nuclear import. Interacts with SREBF1, TLR2, TLR4, TLR9, PTPRZ1, APEX1, FEN1, POLB, TERT. Interacts with IL1B, AGER, MSH2, XPA, XPC, HNF1A, TP53. Interacts with CD24; the probable CD24:SIGLEC10 complex is proposed to inhibit HGMB1-mediated tissue damage immune response. Interacts with THBD; prevents HGMB1 interaction with ACER/RAGE and inhibits HGMB1 pro-inflammatory activity. Interacts with HAVCR2; impairs HMGB1 binding to B-DNA and likely HMGB1-mediated innate immune response. Interacts with XPO1; mediating nuclear export. Interacts with receptor RAGE/AGER. Post-translationally, phosphorylated at serine residues. Phosphorylation in both NLS regions is required for cytoplasmic translocation followed by secretion. Phosphorylation at Thr-51 within the NLS is crucial for secretion induced by porcine reproductive and respiratory syndrome virus (PRRSV). In terms of processing, acetylated on multiple sites upon stimulation with LPS. Acetylation on lysine residues in the nuclear localization signals (NLS 1 and NLS 2) leads to cytoplasmic localization and subsequent secretion. Acetylation on Lys-3 results in preferential binding to DNA ends and impairs DNA bending activity. Reduction/oxidation of cysteine residues Cys-23, Cys-45 and Cys-106 and a possible intramolecular disulfide bond involving Cys-23 and Cys-45 give rise to different redox forms with specific functional activities in various cellular compartments: 1- fully reduced HMGB1 (HMGB1C23hC45hC106h), 2- disulfide HMGB1 (HMGB1C23-C45C106h) and 3- sulfonyl HMGB1 (HMGB1C23soC45soC106so). Post-translationally, poly-ADP-ribosylated by PARP1 when secreted following stimulation with LPS. In terms of processing, in vitro cleavage by CASP1 is liberating a HMG box 1-containing peptide which may mediate immunogenic activity; the peptide antagonizes apoptosis-induced immune tolerance. Can be proteolytically cleaved by a thrombin:thrombomodulin complex; reduces binding to heparin and pro-inflammatory activities. Forms covalent cross-links mediated by transglutaminase TGM2, between a glutamine and the epsilon-amino group of a lysine residue, forming homopolymers and heteropolymers.

It localises to the nucleus. Its subcellular location is the chromosome. It is found in the cytoplasm. The protein resides in the secreted. The protein localises to the cell membrane. It localises to the endosome. Its subcellular location is the endoplasmic reticulum-Golgi intermediate compartment. Functionally, multifunctional redox sensitive protein with various roles in different cellular compartments. In the nucleus is one of the major chromatin-associated non-histone proteins and acts as a DNA chaperone involved in replication, transcription, chromatin remodeling, V(D)J recombination, DNA repair and genome stability. Proposed to be an universal biosensor for nucleic acids. Promotes host inflammatory response to sterile and infectious signals and is involved in the coordination and integration of innate and adaptive immune responses. In the cytoplasm functions as a sensor and/or chaperone for immunogenic nucleic acids implicating the activation of TLR9-mediated immune responses, and mediates autophagy. Acts as a danger-associated molecular pattern (DAMP) molecule that amplifies immune responses during tissue injury. Released to the extracellular environment can bind DNA, nucleosomes, IL-1 beta, CXCL12, AGER isoform 2/sRAGE, lipopolysaccharide (LPS) and lipoteichoic acid (LTA), and activates cells through engagement of multiple surface receptors. In the extracellular compartment fully reduced HMGB1 (released by necrosis) acts as a chemokine, disulfide HMGB1 (actively secreted) as a cytokine, and sulfonyl HMGB1 (released from apoptotic cells) promotes immunological tolerance. Has proangiogenic activity. May be involved in platelet activation. Binds to phosphatidylserine and phosphatidylethanolamide. Bound to RAGE mediates signaling for neuronal outgrowth. May play a role in accumulation of expanded polyglutamine (polyQ) proteins. Its function is as follows. Nuclear functions are attributed to fully reduced HGMB1. Associates with chromatin and binds DNA with a preference to non-canonical DNA structures such as single-stranded DNA, DNA-containing cruciforms or bent structures, supercoiled DNA and ZDNA. Can bent DNA and enhance DNA flexibility by looping thus providing a mechanism to promote activities on various gene promoters by enhancing transcription factor binding and/or bringing distant regulatory sequences into close proximity. May be involved in nucleotide excision repair (NER), mismatch repair (MMR) and base excision repair (BER) pathways, and double strand break repair such as non-homologous end joining (NHEJ). Involved in V(D)J recombination by acting as a cofactor of the RAG complex: acts by stimulating cleavage and RAG protein binding at the 23 bp spacer of conserved recombination signal sequences (RSS). In vitro can displace histone H1 from highly bent DNA. Can restructure the canonical nucleosome leading to relaxation of structural constraints for transcription factor-binding. Enhances binding of sterol regulatory element-binding proteins (SREBPs) such as SREBF1 to their cognate DNA sequences and increases their transcriptional activities. Facilitates binding of TP53 to DNA. May be involved in mitochondrial quality control and autophagy in a transcription-dependent fashion implicating HSPB1. Can modulate the activity of the telomerase complex and may be involved in telomere maintenance. Represses porcine circovirus type 2 replication within the nucleus by binding to the Ori region of the viral genome. In the cytoplasm proposed to dissociate the BECN1:BCL2 complex via competitive interaction with BECN1 leading to autophagy activation. Can protect BECN1 and ATG5 from calpain-mediated cleavage and thus proposed to control their proautophagic and proapoptotic functions and to regulate the extent and severity of inflammation-associated cellular injury. In myeloid cells has a protective role against endotoxemia and bacterial infection by promoting autophagy. Involved in endosomal translocation and activation of TLR9 in response to CpG-DNA in macrophages. In terms of biological role, in the extracellular compartment (following either active secretion or passive release) involved in regulation of the inflammatory response. Fully reduced HGMB1 (which subsequently gets oxidized after release) in association with CXCL12 mediates the recruitment of inflammatory cells during the initial phase of tissue injury; the CXCL12:HMGB1 complex triggers CXCR4 homodimerization. Induces the migration of monocyte-derived immature dendritic cells and seems to regulate adhesive and migratory functions of neutrophils implicating AGER/RAGE and ITGAM. Can bind to various types of DNA and RNA including microbial unmethylated CpG-DNA to enhance the innate immune response to nucleic acids. Proposed to act in promiscuous DNA/RNA sensing which cooperates with subsequent discriminative sensing by specific pattern recognition receptors. Promotes extracellular DNA-induced AIM2 inflammasome activation implicating AGER/RAGE. Disulfide HMGB1 binds to transmembrane receptors, such as AGER/RAGE, TLR2, TLR4 and probably TREM1, thus activating their signal transduction pathways. Mediates the release of cytokines/chemokines such as TNF, IL-1, IL-6, IL-8, CCL2, CCL3, CCL4 and CXCL10. Promotes secretion of interferon-gamma by macrophage-stimulated natural killer (NK) cells in concert with other cytokines like IL-2 or IL-12. TLR4 is proposed to be the primary receptor promoting macrophage activation and signaling through TLR4 seems to implicate LY96/MD-2. In bacterial LPS- or LTA-mediated inflammatory responses binds to the endotoxins and transfers them to CD14 for signaling to the respective TLR4:LY96 and TLR2 complexes. Contributes to tumor proliferation by association with ACER/RAGE. Can bind to IL1-beta and signals through the IL1R1:IL1RAP receptor complex. Binding to class A CpG activates cytokine production in plasmacytoid dendritic cells implicating TLR9, MYD88 and AGER/RAGE and can activate autoreactive B cells. Via HMGB1-containing chromatin immune complexes may also promote B cell responses to endogenous TLR9 ligands through a B-cell receptor (BCR)-dependent and ACER/RAGE-independent mechanism. Inhibits phagocytosis of apoptotic cells by macrophages; the function is dependent on poly-ADP-ribosylation and involves binding to phosphatidylserine on the cell surface of apoptotic cells. In adaptive immunity may be involved in enhancing immunity through activation of effector T cells and suppression of regulatory T (TReg) cells. In contrast, without implicating effector or regulatory T-cells, required for tumor infiltration and activation of T-cells expressing the lymphotoxin LTA:LTB heterotrimer thus promoting tumor malignant progression. Also reported to limit proliferation of T-cells. Released HMGB1:nucleosome complexes formed during apoptosis can signal through TLR2 to induce cytokine production. Involved in induction of immunological tolerance by apoptotic cells; its pro-inflammatory activities when released by apoptotic cells are neutralized by reactive oxygen species (ROS)-dependent oxidation specifically on Cys-106. During macrophage activation by activated lymphocyte-derived self apoptotic DNA (ALD-DNA) promotes recruitment of ALD-DNA to endosomes. This Sus scrofa (Pig) protein is High mobility group protein B1 (HMGB1).